The chain runs to 355 residues: UDP-3-O-acylglucosamine N-acyltransferase (355 aa).

His248 functions as the Proton acceptor in the catalytic mechanism.

This sequence belongs to the transferase hexapeptide repeat family. LpxD subfamily. Homotrimer.

The enzyme catalyses a UDP-3-O-[(3R)-3-hydroxyacyl]-alpha-D-glucosamine + a (3R)-hydroxyacyl-[ACP] = a UDP-2-N,3-O-bis[(3R)-3-hydroxyacyl]-alpha-D-glucosamine + holo-[ACP] + H(+). The protein operates within bacterial outer membrane biogenesis; LPS lipid A biosynthesis. In terms of biological role, catalyzes the N-acylation of UDP-3-O-acylglucosamine using 3-hydroxyacyl-ACP as the acyl donor. Is involved in the biosynthesis of lipid A, a phosphorylated glycolipid that anchors the lipopolysaccharide to the outer membrane of the cell. The chain is UDP-3-O-acylglucosamine N-acyltransferase from Syntrophobacter fumaroxidans (strain DSM 10017 / MPOB).